A 343-amino-acid polypeptide reads, in one-letter code: Ferredoxin--NADP reductase (343 aa).

FAD is bound by residues D36, Q44, Y49, V89, F124, D289, and T330.

It belongs to the ferredoxin--NADP reductase type 2 family. Homodimer. It depends on FAD as a cofactor.

The catalysed reaction is 2 reduced [2Fe-2S]-[ferredoxin] + NADP(+) + H(+) = 2 oxidized [2Fe-2S]-[ferredoxin] + NADPH. The protein is Ferredoxin--NADP reductase of Mesorhizobium japonicum (strain LMG 29417 / CECT 9101 / MAFF 303099) (Mesorhizobium loti (strain MAFF 303099)).